Consider the following 212-residue polypeptide: Redox-sensing transcriptional repressor Rex (212 aa).

Positions leucine 17–phenylalanine 56 form a DNA-binding region, H-T-H motif. Glycine 91–glycine 96 provides a ligand contact to NAD(+).

Belongs to the transcriptional regulatory Rex family. Homodimer.

The protein localises to the cytoplasm. In terms of biological role, modulates transcription in response to changes in cellular NADH/NAD(+) redox state. This is Redox-sensing transcriptional repressor Rex from Streptococcus agalactiae serotype III (strain NEM316).